The sequence spans 248 residues: Ribonuclease 3 (248 aa).

Positions 15–142 (LKAFFKQYHV…MIAALYLDLG (128 aa)) constitute an RNase III domain. Glu55 provides a ligand contact to Mg(2+). Asp59 is an active-site residue. The Mg(2+) site is built by Asp128 and Glu131. Glu131 is an active-site residue. A DRBM domain is found at 169 to 240 (DYKTELQEFL…ARDALQKLAT (72 aa)).

Belongs to the ribonuclease III family. Homodimer. Requires Mg(2+) as cofactor.

Its subcellular location is the cytoplasm. It catalyses the reaction Endonucleolytic cleavage to 5'-phosphomonoester.. Its function is as follows. Digests double-stranded RNA. Involved in the processing of primary rRNA transcript to yield the immediate precursors to the large and small rRNAs (23S and 16S). Processes some mRNAs, and tRNAs when they are encoded in the rRNA operon. Processes pre-crRNA and tracrRNA of type II CRISPR loci if present in the organism. In Spiroplasma citri, this protein is Ribonuclease 3.